The primary structure comprises 269 residues: MLEVIHTGLNIGSKTLLHDISFIIKPGEMVAICGPNGAGKSSLIRLLCGELKPSSGEVRWEGKSLAEWNLLQLARQRALMQQHAEVGFAYTALEIILLGRHPHHLGANRPQDYQIAMAAMQEVGAVHLAEQIYSTLSGGEQARVQMARVLAQIWESSQGARLLLLDEPTAALDPLQQHRMLTIARKWADKGDVAVVAIVHDLNLAAQYADRIALLRDGRLQAIDRVESIMTPAMVEACFDLPCVLLNHPDGGTPMIAARRHPSSSMIAT.

In terms of domain architecture, ABC transporter spans L2–P242. G34 to S41 contributes to the ATP binding site.

The protein belongs to the ABC transporter superfamily. Heme (hemin) importer (TC 3.A.1.14.5) family. The complex is composed of two ATP-binding proteins (HmuV), two transmembrane proteins (HmuU) and a solute-binding protein (HmuT).

Its subcellular location is the cell inner membrane. In terms of biological role, part of the ABC transporter complex HmuTUV involved in hemin import. Responsible for energy coupling to the transport system. This is Hemin import ATP-binding protein HmuV from Methylobacillus flagellatus (strain ATCC 51484 / DSM 6875 / VKM B-1610 / KT).